We begin with the raw amino-acid sequence, 1888 residues long: E3 ubiquitin-protein ligase UBR3 (1888 aa).

Residues 1–24 form a disordered region; the sequence is MAAAAAAAVGGQQPSQPELPAPGL. A UBR-type zinc finger spans residues 118–189; sequence ALCGLVWTAN…ESGFCKRHQI (72 aa). Residues 339 to 362 are disordered; the sequence is GQVDSSDEDDQDGSQGLGKRKRVK. Phosphoserine is present on residues serine 343 and serine 344. 2 consecutive transmembrane segments (helical) span residues 761-781 and 919-939; these read MLEG…HLGM and LLHC…ILMD. Disordered stretches follow at residues 1008–1028 and 1164–1186; these read APEV…GSLQ and VPPK…RQKA. The span at 1016–1028 shows a compositional bias: polar residues; sequence PASTSSDNLGSLQ. Residues 1168–1199 adopt a coiled-coil conformation; that stretch reads KVTAAEKKTLDKEERRQKARERQQKLLAEFAS. Basic and acidic residues predominate over residues 1170 to 1186; sequence TAAEKKTLDKEERRQKA. Serine 1199 is subject to Phosphoserine. Residues 1306–1364 form an RING-type; degenerate zinc finger; it reads DSSCLLAVSIGWEGGVYVQTCGHTLHIDCHKSYMESLRNDQVLQGFSVDKGEFTCPLCR. The chain crosses the membrane as a helical span at residues 1806–1826; it reads QNCGAGTGIFLLINASVIIII.

The protein belongs to the E3 ubiquitin-protein ligase UBR1-like family. Interacts with UBE2A and UBE2B.

The protein resides in the membrane. It catalyses the reaction S-ubiquitinyl-[E2 ubiquitin-conjugating enzyme]-L-cysteine + [acceptor protein]-L-lysine = [E2 ubiquitin-conjugating enzyme]-L-cysteine + N(6)-ubiquitinyl-[acceptor protein]-L-lysine.. It participates in protein modification; protein ubiquitination. E3 ubiquitin-protein ligase which is a component of the N-end rule pathway. Does not bind to proteins bearing specific N-terminal residues that are destabilizing according to the N-end rule, leading to their ubiquitination and subsequent degradation. May play a role in Shh signaling by mediating the ubiquitination of Kif7. May be important for MYH9 function in certain tissues, possibly by regulating the ubiquitination of MYH9 and consequently affecting its interaction with MYO7A. The sequence is that of E3 ubiquitin-protein ligase UBR3 (UBR3) from Homo sapiens (Human).